The sequence spans 477 residues: Protein translocase subunit SecY (477 aa).

The next 10 helical transmembrane spans lie at 28–48 (FMIS…LAII), 67–89 (FFSL…AVGI), 130–150 (IITL…ATNS), 165–185 (DFVA…VFLG), 196–216 (GITL…FIAA), 234–254 (AISF…TTFI), 286–306 (SAGV…VTIA), 329–349 (GIVL…YIQI), 387–407 (FIGA…SALI), and 413–433 (LSLG…FMSA).

The protein belongs to the SecY/SEC61-alpha family. Component of the Sec protein translocase complex. Heterotrimer consisting of SecY, SecE and SecG subunits. The heterotrimers can form oligomers, although 1 heterotrimer is thought to be able to translocate proteins. Interacts with the ribosome. Interacts with SecDF, and other proteins may be involved. Interacts with SecA.

The protein localises to the cell membrane. In terms of biological role, the central subunit of the protein translocation channel SecYEG. Consists of two halves formed by TMs 1-5 and 6-10. These two domains form a lateral gate at the front which open onto the bilayer between TMs 2 and 7, and are clamped together by SecE at the back. The channel is closed by both a pore ring composed of hydrophobic SecY resides and a short helix (helix 2A) on the extracellular side of the membrane which forms a plug. The plug probably moves laterally to allow the channel to open. The ring and the pore may move independently. The polypeptide is Protein translocase subunit SecY (Mycoplasma pneumoniae (strain ATCC 29342 / M129 / Subtype 1) (Mycoplasmoides pneumoniae)).